Consider the following 203-residue polypeptide: Small ribosomal subunit protein uS4 (203 aa).

One can recognise an S4 RNA-binding domain in the interval 93–156 (QRLDNVVFRL…MKVPAILEAV (64 aa)).

This sequence belongs to the universal ribosomal protein uS4 family. As to quaternary structure, part of the 30S ribosomal subunit. Contacts protein S5. The interaction surface between S4 and S5 is involved in control of translational fidelity.

In terms of biological role, one of the primary rRNA binding proteins, it binds directly to 16S rRNA where it nucleates assembly of the body of the 30S subunit. Functionally, with S5 and S12 plays an important role in translational accuracy. This Lactococcus lactis subsp. lactis (strain IL1403) (Streptococcus lactis) protein is Small ribosomal subunit protein uS4.